Reading from the N-terminus, the 231-residue chain is NADH-ubiquinone oxidoreductase chain 4 (231 aa).

7 consecutive transmembrane segments (helical) span residues Pro1–Ile21, Val34–Leu54, Ser61–Ile80, Trp84–Leu106, Ile128–Pro148, Leu156–Ser176, and Leu211–Ile231.

Belongs to the complex I subunit 4 family.

Its subcellular location is the mitochondrion membrane. It catalyses the reaction a ubiquinone + NADH + 5 H(+)(in) = a ubiquinol + NAD(+) + 4 H(+)(out). Functionally, core subunit of the mitochondrial membrane respiratory chain NADH dehydrogenase (Complex I) that is believed to belong to the minimal assembly required for catalysis. Complex I functions in the transfer of electrons from NADH to the respiratory chain. The immediate electron acceptor for the enzyme is believed to be ubiquinone. The sequence is that of NADH-ubiquinone oxidoreductase chain 4 (MT-ND4) from Tropidolaemus wagleri (Wagler's pit viper).